A 343-amino-acid chain; its full sequence is Armadillo repeat-containing protein 10 (343 aa).

Residues 5–27 (RGAGWVAAGLLLGAGACYCIYRL) traverse the membrane as a helical segment. Residues 43–83 (SKSAGALEEGTSEGQLCGRSARPQTGGTWESQWSKTSQPED) form a disordered region. Ser-45 bears the Phosphoserine mark. Glu-50 is subject to Phosphothreonine. Over residues 64–82 (RPQTGGTWESQWSKTSQPE) the composition is skewed to polar residues. Thr-85 bears the Phosphothreonine mark. An ARM repeat occupies 138-180 (GGIPIVANKINHSNQSIKEKALNALNNLSVNVENQIKIKIYIS).

Interacts with the DNA-binding domain of p53/TP53. As to expression, expressed in all tissues tested with higher expression in placenta, liver, kidney, heart and brain.

It is found in the endoplasmic reticulum membrane. Its subcellular location is the mitochondrion outer membrane. Functionally, may play a role in cell survival and cell growth. May suppress the transcriptional activity of p53/TP53. This chain is Armadillo repeat-containing protein 10 (ARMC10), found in Homo sapiens (Human).